We begin with the raw amino-acid sequence, 437 residues long: Adenylosuccinate synthetase (437 aa).

GTP contacts are provided by residues G12–K18 and G40–T42. The active-site Proton acceptor is the D13. Residues D13 and G40 each contribute to the Mg(2+) site. Residues D13–K16, N38–H41, T131, R145, Q225, and T240 each bind IMP. Catalysis depends on H41, which acts as the Proton donor. The tract at residues T281–F304 is disordered. Residues G288–E303 are compositionally biased toward basic and acidic residues. T306–R312 contacts substrate. IMP is bound at residue R310. Residues R312, K338–D340, and S420–S422 contribute to the GTP site.

Belongs to the adenylosuccinate synthetase family. Homodimer. Mg(2+) serves as cofactor.

Its subcellular location is the cytoplasm. The catalysed reaction is IMP + L-aspartate + GTP = N(6)-(1,2-dicarboxyethyl)-AMP + GDP + phosphate + 2 H(+). Its pathway is purine metabolism; AMP biosynthesis via de novo pathway; AMP from IMP: step 1/2. Functionally, plays an important role in the de novo pathway of purine nucleotide biosynthesis. Catalyzes the first committed step in the biosynthesis of AMP from IMP. The polypeptide is Adenylosuccinate synthetase (Ruegeria sp. (strain TM1040) (Silicibacter sp.)).